We begin with the raw amino-acid sequence, 217 residues long: Octanoyltransferase (217 aa).

One can recognise a BPL/LPL catalytic domain in the interval serine 33 to serine 208. Residues arginine 72–histidine 79, serine 139–glycine 141, and glycine 152–alanine 154 contribute to the substrate site. Cysteine 170 (acyl-thioester intermediate) is an active-site residue.

Belongs to the LipB family.

It localises to the cytoplasm. It catalyses the reaction octanoyl-[ACP] + L-lysyl-[protein] = N(6)-octanoyl-L-lysyl-[protein] + holo-[ACP] + H(+). The protein operates within protein modification; protein lipoylation via endogenous pathway; protein N(6)-(lipoyl)lysine from octanoyl-[acyl-carrier-protein]: step 1/2. In terms of biological role, catalyzes the transfer of endogenously produced octanoic acid from octanoyl-acyl-carrier-protein onto the lipoyl domains of lipoate-dependent enzymes. Lipoyl-ACP can also act as a substrate although octanoyl-ACP is likely to be the physiological substrate. In Pseudoalteromonas atlantica (strain T6c / ATCC BAA-1087), this protein is Octanoyltransferase.